A 289-amino-acid chain; its full sequence is Phosphatidylserine decarboxylase proenzyme (289 aa).

Residues D92, H149, and S254 each act as charge relay system; for autoendoproteolytic cleavage activity in the active site. S254 (schiff-base intermediate with substrate; via pyruvic acid; for decarboxylase activity) is an active-site residue. A Pyruvic acid (Ser); by autocatalysis modification is found at S254.

It belongs to the phosphatidylserine decarboxylase family. PSD-B subfamily. Prokaryotic type I sub-subfamily. Heterodimer of a large membrane-associated beta subunit and a small pyruvoyl-containing alpha subunit. Pyruvate is required as a cofactor. Post-translationally, is synthesized initially as an inactive proenzyme. Formation of the active enzyme involves a self-maturation process in which the active site pyruvoyl group is generated from an internal serine residue via an autocatalytic post-translational modification. Two non-identical subunits are generated from the proenzyme in this reaction, and the pyruvate is formed at the N-terminus of the alpha chain, which is derived from the carboxyl end of the proenzyme. The autoendoproteolytic cleavage occurs by a canonical serine protease mechanism, in which the side chain hydroxyl group of the serine supplies its oxygen atom to form the C-terminus of the beta chain, while the remainder of the serine residue undergoes an oxidative deamination to produce ammonia and the pyruvoyl prosthetic group on the alpha chain. During this reaction, the Ser that is part of the protease active site of the proenzyme becomes the pyruvoyl prosthetic group, which constitutes an essential element of the active site of the mature decarboxylase.

The protein resides in the cell membrane. It carries out the reaction a 1,2-diacyl-sn-glycero-3-phospho-L-serine + H(+) = a 1,2-diacyl-sn-glycero-3-phosphoethanolamine + CO2. It participates in phospholipid metabolism; phosphatidylethanolamine biosynthesis; phosphatidylethanolamine from CDP-diacylglycerol: step 2/2. Functionally, catalyzes the formation of phosphatidylethanolamine (PtdEtn) from phosphatidylserine (PtdSer). In Pseudomonas paraeruginosa (strain DSM 24068 / PA7) (Pseudomonas aeruginosa (strain PA7)), this protein is Phosphatidylserine decarboxylase proenzyme.